The following is a 1649-amino-acid chain: MGSTFKREIAKVTVKVASPEVIRSWSSGEVKKPETINYRTFKPEKDGLFCEKIFGPTKDYECACGKYKGKKYEGTVCERCGVRVESKEARRRRMGHIDLVAPVVHVWYLKSSPSILSSLLGIPAKELENVVYYGGKRIIEKILIVTDPKNTDFIKGSQLYQTEYEIYSQKLDFEVVPGVIIKSPSTPVTSSISGEVKIRHEKTHTDREITWVDVRKISRAEHRLYTGMILNVKNGDKVNQGDEIVSEMQIDPIYAPFDGTVEIDEISESITVRPLSTSKDIPVTFSLPYGVKPTVSNGAKVKKGDQLTNGTVLPAVVASVSGTISFGKDLNVRPREDGKYEVLKNGTLFVENVVEEKHYPLFEGALIYVEDGQEINEGDVIADRFLFEDEYLTIDEFKIFEEHYPAMFTAESEVENDRPIVVITKIDDEVSVETGLKIGDIITDDQYWAYRVLYGEKIEADSGAAAIKKLLQNLDLEKLKAEIEAELKKVSKSSGRAKKLLRRLKIVKDLLKSETKPEWMVLEAIPVVPPDIRPMIQVEGGRFATTDLNDLYRRVINRNNRLKKLYEMNSPEIIIKNEKRMLQEAVDSLIYNGRMGKAVTDRNGRPLKSLTDLLKGKKGRFRRNLLGKRVDYSGRAVIVVGPHLKIHECGLPKKMAMELFKPFVLAELLNKDDETSKTARKMKKAIIEKELPQAYEVLEEIIKGHPVLLNRAPTLHRMSLQAFEPRLIEGNAIQLHPLVCPPFNADFDGDQMAVHVPLSAAAQAEAKFLMLSRYNIISPAHGKPISMPGKDIVAGVYYLTMVDKNFDSVKEKDIKWKFSSIEEAGLAYEFGYIKLHDPILVKVDDKVIKTTYGRLIFASIVPDEFKDYNKTYGKGAIKDLVYNTFKKYGVDRTADLLDDIKDLGFHYATISGLTVSITDFYISPEREKIIEQAKAKVSEIEELFAEGFLSDEERYRETIKIWADATEKVQDATFEYIGKDPFNPIYIMVDSGARGNKDQLKQLAGMRGLMADPSGRTIEIPIISNFREGLSVLEFFISTHGARKGSADTALRTSSAGYLTRRLVDVAQSVVVTTTDCGTHNGVRATVLKSSDGLTVEKLEDFLFGRVLAKDVFDPKTNNVLVNPETGKQYTRDTIIDDDDAKFLGNYSVRIPVVTEGEIDLSSPELPESYCELAEDFVYNDVHYEVGTEVNWDVVRKATSAGLSKLKVKIYPVVGKVSVETVLSSKDSKQLVVDEELIEVTTAKILEENNVESVQVRPEIIVRSVLTCEAEHGVCSKCYGMDLSNHQIVGVGESVGVVAAQSIGEPGTQLTMRTFHTGGIATTADITQGLPRAEELFEARKKLKEPEGVFSRVKGYVKDIVEDETGRKKVYIEDEAGDIHEYEIPIKVKVAVNKGQKVLPGQSLSTGAIRPRKILETLDVDATALYLLKEIKKVYVEQGVDIHDKHFEIIIKQMLDKVEVVDPGDTDYLPGDLVRLETVKRINKEILESNVQVDSNRKRVIGKELHHHLIAEDENGQIVEIAKEGEEVTEEILEKAIKLGIKDLVVKNGEGEIVTYQILPKEPIKYRRRLLRITKASLERVGWLSAASFQQTPQVLTEAAIEGAEDLLLGLKENVIVGQLIPAGTGLDMFANIQIEETPRFAQEKEKMA.

Zn(2+) is bound by residues cysteine 62, cysteine 64, cysteine 77, and cysteine 80. The Mg(2+) site is built by aspartate 746, aspartate 748, and aspartate 750. Zn(2+)-binding residues include cysteine 1077, cysteine 1268, cysteine 1275, and cysteine 1278.

It belongs to the RNA polymerase beta' chain family. In terms of assembly, the RNAP catalytic core consists of 2 alpha, 1 beta, 1 beta' and 1 omega subunit. When a sigma factor is associated with the core the holoenzyme is formed, which can initiate transcription. It depends on Mg(2+) as a cofactor. The cofactor is Zn(2+).

It catalyses the reaction RNA(n) + a ribonucleoside 5'-triphosphate = RNA(n+1) + diphosphate. Functionally, DNA-dependent RNA polymerase catalyzes the transcription of DNA into RNA using the four ribonucleoside triphosphates as substrates. This chain is DNA-directed RNA polymerase subunit beta', found in Thermosipho africanus (strain TCF52B).